The primary structure comprises 559 residues: 5'-AMP-activated protein kinase catalytic subunit alpha-1 (559 aa).

The 253-residue stretch at 27–279 (YILGDTLGVG…IKDIREHEWF (253 aa)) folds into the Protein kinase domain. Position 32 is a phosphothreonine (Thr32). Residues 33-41 (LGVGTFGKV) and Lys56 contribute to the ATP site. Asp150 (proton acceptor) is an active-site residue. Thr183 bears the Phosphothreonine; by LKB1 and CaMKK2 mark. An AIS region spans residues 302–381 (EALKEVCEKF…PERVPFLVAE (80 aa)). Thr355 is subject to Phosphothreonine. At Ser356 the chain carries Phosphoserine. Ser360 carries the phosphoserine; by ULK1 modification. Thr368 is subject to Phosphothreonine; by ULK1. Thr382 carries the phosphothreonine modification. Phosphoserine; by ULK1 is present on Ser397. A phosphoserine mark is found at Ser467 and Ser486. Positions 485 to 505 (KSGTATPQRSGSISNYRSCQR) are enriched in polar residues. The tract at residues 485–536 (KSGTATPQRSGSISNYRSCQRSDSDAEAQGKPSDVSLTSSVTSLDSSPVDVA) is disordered. Thr488 bears the Phosphothreonine; by ULK1 mark. At Thr490 the chain carries Phosphothreonine. Phosphoserine occurs at positions 496, 508, 524, and 527. Positions 516–535 (PSDVSLTSSVTSLDSSPVDV) are enriched in low complexity.

The protein belongs to the protein kinase superfamily. CAMK Ser/Thr protein kinase family. SNF1 subfamily. As to quaternary structure, AMPK is a heterotrimer of an alpha catalytic subunit (PRKAA1 or PRKAA2), a beta (PRKAB1 or PRKAB2) and a gamma non-catalytic subunits (PRKAG1, PRKAG2 or PRKAG3). Interacts with FNIP1 and FNIP2. Mg(2+) serves as cofactor. Phosphorylated at Thr-183 by STK11/LKB1 in complex with STE20-related adapter-alpha (STRADA) pseudo kinase and CAB39. Also phosphorylated at Thr-183 by CAMKK2; triggered by a rise in intracellular calcium ions, without detectable changes in the AMP/ATP ratio. CAMKK1 can also phosphorylate Thr-183, but at a much lower level. Dephosphorylated by protein phosphatase 2A and 2C (PP2A and PP2C). Phosphorylated by ULK1 and ULK2; leading to negatively regulate AMPK activity and suggesting the existence of a regulatory feedback loop between ULK1, ULK2 and AMPK. Dephosphorylated by PPM1A and PPM1B. In terms of processing, ubiquitinated. Post-translationally, glycosylated; O-GlcNAcylated by OGT, promoting the AMP-activated protein kinase (AMPK) activity.

It localises to the cytoplasm. Its subcellular location is the nucleus. It carries out the reaction L-seryl-[protein] + ATP = O-phospho-L-seryl-[protein] + ADP + H(+). The catalysed reaction is L-threonyl-[protein] + ATP = O-phospho-L-threonyl-[protein] + ADP + H(+). The enzyme catalyses L-seryl-[acetyl-CoA carboxylase] + ATP = O-phospho-L-seryl-[acetyl-CoA carboxylase] + ADP + H(+). It catalyses the reaction L-seryl-[3-hydroxy-3-methylglutaryl-coenzyme A reductase] + ATP = O-phospho-L-seryl-[3-hydroxy-3-methylglutaryl-coenzyme A reductase] + ADP + H(+). It carries out the reaction L-seryl-[tau protein] + ATP = O-phospho-L-seryl-[tau protein] + ADP + H(+). The catalysed reaction is L-threonyl-[tau protein] + ATP = O-phospho-L-threonyl-[tau protein] + ADP + H(+). Its activity is regulated as follows. Activated by phosphorylation on Thr-183. Binding of AMP to non-catalytic gamma subunit (PRKAG1, PRKAG2 or PRKAG3) results in allosteric activation, inducing phosphorylation on Thr-183. AMP-binding to gamma subunit also sustains activity by preventing dephosphorylation of Thr-183. ADP also stimulates Thr-183 phosphorylation, without stimulating already phosphorylated AMPK. ATP promotes dephosphorylation of Thr-183, rendering the enzyme inactive. Under physiological conditions AMPK mainly exists in its inactive form in complex with ATP, which is much more abundant than AMP. Selectively inhibited by compound C (6-[4-(2-Piperidin-1-yl-ethoxy)-phenyl)]-3-pyridin-4-yl-pyyrazolo[1,5-a] pyrimidine. Activated by resveratrol, a natural polyphenol present in red wine, and S17834, a synthetic polyphenol. Its function is as follows. Catalytic subunit of AMP-activated protein kinase (AMPK), an energy sensor protein kinase that plays a key role in regulating cellular energy metabolism. In response to reduction of intracellular ATP levels, AMPK activates energy-producing pathways and inhibits energy-consuming processes: inhibits protein, carbohydrate and lipid biosynthesis, as well as cell growth and proliferation. AMPK acts via direct phosphorylation of metabolic enzymes, and by longer-term effects via phosphorylation of transcription regulators. Regulates lipid synthesis by phosphorylating and inactivating lipid metabolic enzymes such as ACACA, ACACB, GYS1, HMGCR and LIPE; regulates fatty acid and cholesterol synthesis by phosphorylating acetyl-CoA carboxylase (ACACA and ACACB) and hormone-sensitive lipase (LIPE) enzymes, respectively. Promotes lipolysis of lipid droplets by mediating phosphorylation of isoform 1 of CHKA (CHKalpha2). Regulates insulin-signaling and glycolysis by phosphorylating IRS1, PFKFB2 and PFKFB3. AMPK stimulates glucose uptake in muscle by increasing the translocation of the glucose transporter SLC2A4/GLUT4 to the plasma membrane, possibly by mediating phosphorylation of TBC1D4/AS160. Regulates transcription and chromatin structure by phosphorylating transcription regulators involved in energy metabolism such as CRTC2/TORC2, FOXO3, histone H2B, HDAC5, MEF2C, MLXIPL/ChREBP, EP300, HNF4A, p53/TP53, SREBF1, SREBF2 and PPARGC1A. Acts as a key regulator of glucose homeostasis in liver by phosphorylating CRTC2/TORC2, leading to CRTC2/TORC2 sequestration in the cytoplasm. In response to stress, phosphorylates 'Ser-36' of histone H2B (H2BS36ph), leading to promote transcription. Acts as a key regulator of cell growth and proliferation by phosphorylating FNIP1, TSC2, RPTOR, WDR24 and ATG1/ULK1: in response to nutrient limitation, negatively regulates the mTORC1 complex by phosphorylating RPTOR component of the mTORC1 complex and by phosphorylating and activating TSC2. Also phosphorylates and inhibits GATOR2 subunit WDR24 in response to nutrient limitation, leading to suppress glucose-mediated mTORC1 activation. In response to energetic stress, phosphorylates FNIP1, inactivating the non-canonical mTORC1 signaling, thereby promoting nuclear translocation of TFEB and TFE3, and inducing transcription of lysosomal or autophagy genes. In response to nutrient limitation, promotes autophagy by phosphorylating and activating ATG1/ULK1. In that process, it also activates WDR45/WIPI4. Phosphorylates CASP6, thereby preventing its autoprocessing and subsequent activation. In response to nutrient limitation, phosphorylates transcription factor FOXO3 promoting FOXO3 mitochondrial import. Also acts as a regulator of cellular polarity by remodeling the actin cytoskeleton; probably by indirectly activating myosin. AMPK also acts as a regulator of circadian rhythm by mediating phosphorylation of CRY1, leading to destabilize it. May regulate the Wnt signaling pathway by phosphorylating CTNNB1, leading to stabilize it. Also has tau-protein kinase activity: in response to amyloid beta A4 protein (APP) exposure, activated by CAMKK2, leading to phosphorylation of MAPT/TAU; however the relevance of such data remains unclear in vivo. Also phosphorylates CFTR, EEF2K, KLC1, NOS3 and SLC12A1. Regulates hepatic lipogenesis. Activated via SIRT3, represses sterol regulatory element-binding protein (SREBP) transcriptional activities and ATP-consuming lipogenesis to restore cellular energy balance. Upon stress, regulates mitochondrial fragmentation through phosphorylation of MTFR1L. The polypeptide is 5'-AMP-activated protein kinase catalytic subunit alpha-1 (Prkaa1) (Mus musculus (Mouse)).